The following is a 301-amino-acid chain: PWI domain-containing protein C825.05c (301 aa).

Residues Ser26–Glu137 enclose the PWI domain. Ser86 carries the phosphoserine modification. Composition is skewed to basic and acidic residues over residues Leu145–Gly182, Thr189–Arg205, and Arg215–Ser229. A disordered region spans residues Leu145 to Asp301. The residue at position 199 (Ser199) is a Phosphoserine. Basic residues predominate over residues Pro244–Arg253. Residues Thr254–Leu289 show a composition bias toward basic and acidic residues. The segment covering Ser290–Asp301 has biased composition (polar residues). Ser291 carries the phosphoserine modification.

It is found in the nucleus. The polypeptide is PWI domain-containing protein C825.05c (Schizosaccharomyces pombe (strain 972 / ATCC 24843) (Fission yeast)).